Consider the following 93-residue polypeptide: Hematopoietic cell signal transducer (93 aa).

An N-terminal signal peptide occupies residues 1-18 (MIHLGHILFLLLLPVAAA). Topologically, residues 19–48 (QTTPGERSSLPAFYPGTSGSCSGCGSLSLP) are extracellular. A helical transmembrane segment spans residues 49–69 (LLAGLVAADAVASLLIVGAVF). At 70–93 (LCARPRRSPAQEDGKVYINMPGRG) the chain is on the cytoplasmic side. Tyr86 carries the phosphotyrosine modification. Residues 86-88 (YIN) are GRB2 binding site. The tract at residues 86–89 (YINM) is PIK3R1 binding site.

Belongs to the DAP10 family. As to quaternary structure, interacts with CLEC5A. Forms an CLEC5A/TYROBP/HCST trimolecular complex depending almost solely on TYROBP. Homodimer; Disulfide-linked. Heterohexamer composed of four subunits of HCST/DAP10 and two subunits of KLRK1. Interacts (via transmembrane domain) with KLRK1 (via transmembrane domain); the interaction is required for KLRK1 NK cell surface and induces NK cell-mediated cytotoxicity. Interacts with PIK3R1 and GRB2. Interacts with CD300H. Phosphorylated; PIK3R1 and GRB2 associate specifically with tyrosine-phosphorylated HCST. In terms of processing, O-glycosylated. In terms of tissue distribution, predominantly expressed in hemopoietic cells such as NK cells, subset of T-cells and monocytes. Detected in leukocytes, spleen, and thymus.

The protein localises to the membrane. Functionally, transmembrane adapter protein which associates with KLRK1 to form an activation receptor KLRK1-HCST in lymphoid and myeloid cells; this receptor plays a major role in triggering cytotoxicity against target cells expressing cell surface ligands such as MHC class I chain-related MICA and MICB, and UL16-binding proteins (ULBPs); these ligands are up-regulated by stress conditions and pathological state such as viral infection and tumor transformation. Functions as a docking site for PI3-kinase PIK3R1 and GRB2. Interaction of ULBPs with KLRK1-HCST triggers calcium mobilization and activation of the PIK3R1, MAP2K/ERK, and JAK2/STAT5 signaling pathways. Both PIK3R1 and GRB2 are required for full KLRK1-HCST-mediated activation and ultimate killing of target cells. In NK cells, KLRK1-HCST signaling directly induces cytotoxicity and enhances cytokine production initiated via DAP12/TYROBP-associated receptors. In T-cells, it provides primarily costimulation for TCR-induced signals. KLRK1-HCST receptor plays a role in immune surveillance against tumors and is required for cytolysis of tumors cells; indeed, melanoma cells that do not express KLRK1 ligands escape from immune surveillance mediated by NK cells. This chain is Hematopoietic cell signal transducer (HCST), found in Homo sapiens (Human).